Consider the following 228-residue polypeptide: Elongation factor 1-beta 1 (228 aa).

Ala2 is subject to N-acetylalanine. A GST C-terminal domain is found at 14-65; sequence LKTLEEHLAGKTYISGDQLSVDDVKVYAAVLENPGDGFPNASKWYDSVASHL. The disordered stretch occupies residues 75–139; sequence GVRVGGGVAP…DTKKTKESGK (65 aa). Acidic residues predominate over residues 95–115; that stretch reads PAADGDGDDDDDIDLFADETE. The span at 116-138 shows a compositional bias: basic and acidic residues; that stretch reads DEKKAAEEREAAKKDTKKTKESG.

The protein belongs to the EF-1-beta/EF-1-delta family. EF-1 is composed of 4 subunits: alpha, beta (1B-alpha=beta'), delta (1B-beta), and gamma (1B-gamma).

The protein resides in the cell membrane. In terms of biological role, EF-1-beta and EF-1-delta stimulate the exchange of GDP bound to EF-1-alpha to GTP. The sequence is that of Elongation factor 1-beta 1 from Arabidopsis thaliana (Mouse-ear cress).